The chain runs to 369 residues: Porin-like protein BUsg_347 (369 aa).

An N-terminal signal peptide occupies residues 1–23; that stretch reads MKNHKSLAILIPMLFAGSTAVNA.

It belongs to the Gram-negative porin family. Homotrimer.

The protein localises to the cell outer membrane. Forms pores that allow passive diffusion of small molecules across the membrane. The sequence is that of Porin-like protein BUsg_347 from Buchnera aphidicola subsp. Schizaphis graminum (strain Sg).